The chain runs to 364 residues: DNA replication and repair protein RecF (364 aa).

30–37 (GDNGAGKT) contacts ATP.

This sequence belongs to the RecF family.

The protein resides in the cytoplasm. Its function is as follows. The RecF protein is involved in DNA metabolism; it is required for DNA replication and normal SOS inducibility. RecF binds preferentially to single-stranded, linear DNA. It also seems to bind ATP. In Stenotrophomonas maltophilia (strain R551-3), this protein is DNA replication and repair protein RecF.